We begin with the raw amino-acid sequence, 272 residues long: Type III pantothenate kinase (272 aa).

6 to 13 contacts ATP; that stretch reads DVRNTHTV. 109 to 112 is a binding site for substrate; it reads GADR. Aspartate 111 serves as the catalytic Proton acceptor. Aspartate 131 serves as a coordination point for K(+). An ATP-binding site is contributed by serine 134. Threonine 186 is a binding site for substrate.

It belongs to the type III pantothenate kinase family. As to quaternary structure, homodimer. NH4(+) serves as cofactor. The cofactor is K(+).

The protein localises to the cytoplasm. It catalyses the reaction (R)-pantothenate + ATP = (R)-4'-phosphopantothenate + ADP + H(+). It participates in cofactor biosynthesis; coenzyme A biosynthesis; CoA from (R)-pantothenate: step 1/5. Catalyzes the phosphorylation of pantothenate (Pan), the first step in CoA biosynthesis. The sequence is that of Type III pantothenate kinase from Mycobacterium marinum (strain ATCC BAA-535 / M).